The sequence spans 290 residues: ADP-dependent (S)-NAD(P)H-hydrate dehydratase (290 aa).

One can recognise a YjeF C-terminal domain in the interval 5 to 278 (NQTLLEKVII…RYLPKIMKII (274 aa)). Positions 40, 103, and 152 each coordinate (6S)-NADPHX. G218 provides a ligand contact to AMP. (6S)-NADPHX is bound at residue D219.

This sequence belongs to the NnrD/CARKD family. As to quaternary structure, homotetramer. Requires Mg(2+) as cofactor.

The enzyme catalyses (6S)-NADHX + ADP = AMP + phosphate + NADH + H(+). The catalysed reaction is (6S)-NADPHX + ADP = AMP + phosphate + NADPH + H(+). Functionally, catalyzes the dehydration of the S-form of NAD(P)HX at the expense of ADP, which is converted to AMP. Together with NAD(P)HX epimerase, which catalyzes the epimerization of the S- and R-forms, the enzyme allows the repair of both epimers of NAD(P)HX, a damaged form of NAD(P)H that is a result of enzymatic or heat-dependent hydration. This is ADP-dependent (S)-NAD(P)H-hydrate dehydratase from Streptococcus pneumoniae (strain ATCC BAA-255 / R6).